The chain runs to 128 residues: Large ribosomal subunit protein eL32 (128 aa).

Belongs to the eukaryotic ribosomal protein eL32 family.

This is Large ribosomal subunit protein eL32 (rpl32e) from Thermoplasma volcanium (strain ATCC 51530 / DSM 4299 / JCM 9571 / NBRC 15438 / GSS1).